We begin with the raw amino-acid sequence, 325 residues long: Tetraacyldisaccharide 4'-kinase (325 aa).

S54–T61 contributes to the ATP binding site.

The protein belongs to the LpxK family.

It catalyses the reaction a lipid A disaccharide + ATP = a lipid IVA + ADP + H(+). Its pathway is glycolipid biosynthesis; lipid IV(A) biosynthesis; lipid IV(A) from (3R)-3-hydroxytetradecanoyl-[acyl-carrier-protein] and UDP-N-acetyl-alpha-D-glucosamine: step 6/6. Transfers the gamma-phosphate of ATP to the 4'-position of a tetraacyldisaccharide 1-phosphate intermediate (termed DS-1-P) to form tetraacyldisaccharide 1,4'-bis-phosphate (lipid IVA). The sequence is that of Tetraacyldisaccharide 4'-kinase from Rickettsia felis (strain ATCC VR-1525 / URRWXCal2) (Rickettsia azadi).